An 810-amino-acid polypeptide reads, in one-letter code: Zinc finger CCCH domain-containing protein 11A (810 aa).

C3H1-type zinc fingers lie at residues 2 to 29 (PNQG…HCEA), 31 to 57 (IGNE…HMEI), and 60 to 86 (KRSE…HHNR). Serine 108 carries the phosphoserine modification. Glycyl lysine isopeptide (Lys-Gly) (interchain with G-Cter in SUMO2) cross-links involve residues lysine 114 and lysine 124. Serine 132 carries the phosphoserine modification. 4 disordered regions span residues 139-194 (MKVE…GLRV), 223-258 (KKMK…ENVR), 285-351 (GKRK…DKVN), and 367-432 (ERAS…TTCI). A Glycyl lysine isopeptide (Lys-Gly) (interchain with G-Cter in SUMO2) cross-link involves residue lysine 140. Serine 149 and serine 171 each carry phosphoserine. The segment covering 160-175 (ADDDEDDDDQFSEEGD) has biased composition (acidic residues). At serine 290 the chain carries Phosphoserine. Composition is skewed to basic and acidic residues over residues 309–322 (KKVE…DKTP) and 367–390 (ERAS…KTDD). At threonine 321 the chain carries Phosphothreonine. Positions 362–423 (EEILLERASQ…KHRQQEAERQ (62 aa)) form a coiled coil. Serine 370 carries the phosphoserine modification. Residues 391–402 (STSGARSSSTIR) are compositionally biased toward polar residues. Over residues 417–432 (QQEAERQKSKKDTTCI) the composition is skewed to basic and acidic residues. Lysine 478 participates in a covalent cross-link: Glycyl lysine isopeptide (Lys-Gly) (interchain with G-Cter in SUMO2). The disordered stretch occupies residues 482 to 549 (ALRVQQSSES…KEASGETTGV (68 aa)). Residues 486–498 (QQSSESSTSSPSQ) are compositionally biased toward low complexity. Lysine 619 participates in a covalent cross-link: Glycyl lysine isopeptide (Lys-Gly) (interchain with G-Cter in SUMO2). Residues 715-768 (TVPEAENPRDSLVLPPTQSSSDSSPPEVSGPSSSQMSMKTRRLSSASTGKPPLS) are disordered. A compositionally biased stretch (low complexity) spans 729–748 (PPTQSSSDSSPPEVSGPSSS). Positions 749 to 762 (QMSMKTRRLSSAST) are enriched in polar residues.

Interacts with TREX complex components THOC2, DDX39 and POLDIP3; the interactions are ATP-dependent. Interacts with PABPN1; this interaction retains ZC3H11A in nuclear speckles. Interacts with KPNA3.

The protein localises to the nucleus. It localises to the nucleus speckle. Functionally, through its association with TREX complex components, may participate in the export and post-transcriptional coordination of selected mRNA transcripts, including those required to maintain the metabolic processes in embryonic cells. Binds RNA. (Microbial infection) Plays a role in efficient growth of several nuclear-replicating viruses such as HIV-1, influenza virus or herpes simplex virus 1/HHV-1. Required for efficient viral mRNA export. May be required for proper polyadenylation of adenovirus type 5/HAdV-5 capsid mRNA. This chain is Zinc finger CCCH domain-containing protein 11A (ZC3H11A), found in Homo sapiens (Human).